Here is a 118-residue protein sequence, read N- to C-terminus: Ribosome-binding factor A (118 aa).

It belongs to the RbfA family. Monomer. Binds 30S ribosomal subunits, but not 50S ribosomal subunits or 70S ribosomes.

The protein localises to the cytoplasm. One of several proteins that assist in the late maturation steps of the functional core of the 30S ribosomal subunit. Associates with free 30S ribosomal subunits (but not with 30S subunits that are part of 70S ribosomes or polysomes). Required for efficient processing of 16S rRNA. May interact with the 5'-terminal helix region of 16S rRNA. In Dehalococcoides mccartyi (strain ATCC BAA-2100 / JCM 16839 / KCTC 5957 / BAV1), this protein is Ribosome-binding factor A.